A 311-amino-acid chain; its full sequence is 4-hydroxy-tetrahydrodipicolinate synthase (311 aa).

T51 is a binding site for pyruvate. The Proton donor/acceptor role is filled by Y140. The Schiff-base intermediate with substrate role is filled by K168. I209 is a pyruvate binding site.

This sequence belongs to the DapA family. As to quaternary structure, homotetramer; dimer of dimers.

The protein localises to the cytoplasm. It catalyses the reaction L-aspartate 4-semialdehyde + pyruvate = (2S,4S)-4-hydroxy-2,3,4,5-tetrahydrodipicolinate + H2O + H(+). The protein operates within amino-acid biosynthesis; L-lysine biosynthesis via DAP pathway; (S)-tetrahydrodipicolinate from L-aspartate: step 3/4. Catalyzes the condensation of (S)-aspartate-beta-semialdehyde [(S)-ASA] and pyruvate to 4-hydroxy-tetrahydrodipicolinate (HTPA). The polypeptide is 4-hydroxy-tetrahydrodipicolinate synthase (Streptococcus suis (strain 98HAH33)).